The sequence spans 934 residues: Bifunctional uridylyltransferase/uridylyl-removing enzyme (934 aa).

The segment at 1-379 (MSAHDLKLEE…TFSRRKRKLS (379 aa)) is uridylyltransferase. Positions 380–736 (ADGDFVSENH…AKPHTFEAVT (357 aa)) are uridylyl-removing. Residues 496–613 (VDEHLLRCIA…IDFADTVQTM (118 aa)) enclose the HD domain. 2 consecutive ACT domains span residues 737 to 819 (EITV…VLAK) and 848 to 931 (VIEV…RSSQ).

Belongs to the GlnD family. The cofactor is Mg(2+).

It catalyses the reaction [protein-PII]-L-tyrosine + UTP = [protein-PII]-uridylyl-L-tyrosine + diphosphate. It carries out the reaction [protein-PII]-uridylyl-L-tyrosine + H2O = [protein-PII]-L-tyrosine + UMP + H(+). Uridylyltransferase (UTase) activity is inhibited by glutamine, while glutamine activates uridylyl-removing (UR) activity. Functionally, modifies, by uridylylation and deuridylylation, the PII regulatory proteins (GlnB and homologs), in response to the nitrogen status of the cell that GlnD senses through the glutamine level. Under low glutamine levels, catalyzes the conversion of the PII proteins and UTP to PII-UMP and PPi, while under higher glutamine levels, GlnD hydrolyzes PII-UMP to PII and UMP (deuridylylation). Thus, controls uridylylation state and activity of the PII proteins, and plays an important role in the regulation of nitrogen assimilation and metabolism. The chain is Bifunctional uridylyltransferase/uridylyl-removing enzyme from Brucella anthropi (strain ATCC 49188 / DSM 6882 / CCUG 24695 / JCM 21032 / LMG 3331 / NBRC 15819 / NCTC 12168 / Alc 37) (Ochrobactrum anthropi).